Reading from the N-terminus, the 416-residue chain is Zinc finger protein 92 homolog (416 aa).

The 72-residue stretch at 14 to 85 (VSFEDVSVYF…DIPRTWATAG (72 aa)) folds into the KRAB domain. The segment at 86–125 (LHIGDRTQSKTSTSTQKHSGRQLPGADPQGGKEGQAARSS) is disordered. C2H2-type zinc fingers lie at residues 152-174 (YLCQ…RIIH), 180-202 (YACP…QRIH), 208-230 (YACP…QVIH), 236-258 (FACG…ARVH), 264-286 (YACP…QRTH), 292-314 (YACG…QRSH), 320-342 (FACR…RRVH), and 348-370 (YECS…QAVH). Residues 368–416 (AVHGARRPAKAETARRLAGPGSTGPGSAVAATSPPRPSTAARPSRPSRR) form a disordered region. The segment covering 394–416 (SAVAATSPPRPSTAARPSRPSRR) has biased composition (low complexity).

It belongs to the krueppel C2H2-type zinc-finger protein family.

The protein resides in the nucleus. Functionally, KRAB domain-containing zinc-finger protein that represses B1/Alu SINE transposable elements and modulates the transcription of nearby genes in a tissue-specific manner. It regulates glucose homeostasis and lipid metabolism by modulating the expression of the endocrine cell-defining transcription factor, MAFB, in pancreatic islets and, the fat metabolism regulator, ACACB, in adipose tissue and muscle. This chain is Zinc finger protein 92 homolog (ZFP92), found in Homo sapiens (Human).